We begin with the raw amino-acid sequence, 245 residues long: Eukaryotic translation initiation factor 6 (245 aa).

Phosphotyrosine is present on Tyr-113. Position 165 is a phosphothreonine (Thr-165). Ser-166 is subject to Phosphoserine. 2 positions are modified to phosphoserine; by CK1: Ser-174 and Ser-175. A Phosphoserine; by PKC modification is found at Ser-235. A phosphoserine mark is found at Ser-239 and Ser-243.

The protein belongs to the eIF-6 family. Monomer. Associates with the 60S ribosomal subunit. Interacts with RACK1. Interacts with DICER1, AGO2, TARBP2, MOV10 and RPL7A; they form a large RNA-induced silencing complex (RISC). Phosphorylation at Ser-174 and Ser-175 by CSNK1D/CK1 promotes nuclear export. Post-translationally, ufmylated by UFL1.

It localises to the cytoplasm. The protein resides in the nucleus. The protein localises to the nucleolus. In terms of biological role, binds to the 60S ribosomal subunit and prevents its association with the 40S ribosomal subunit to form the 80S initiation complex in the cytoplasm. Behaves as a stimulatory translation initiation factor downstream insulin/growth factors. Is also involved in ribosome biogenesis. Associates with pre-60S subunits in the nucleus and is involved in its nuclear export. Cytoplasmic release of TIF6 from 60S subunits and nuclear relocalization is promoted by a RACK1 (RACK1)-dependent protein kinase C activity. In tissues responsive to insulin, controls fatty acid synthesis and glycolysis by exerting translational control of adipogenic transcription factors such as CEBPB, CEBPD and ATF4 that have G/C rich or uORF in their 5'UTR. Required for ROS-dependent megakaryocyte maturation and platelets formation, controls the expression of mitochondrial respiratory chain genes involved in reactive oxygen species (ROS) synthesis. Involved in miRNA-mediated gene silencing by the RNA-induced silencing complex (RISC). Required for both miRNA-mediated translational repression and miRNA-mediated cleavage of complementary mRNAs by RISC. Modulates cell cycle progression and global translation of pre-B cells, its activation seems to be rate-limiting in tumorigenesis and tumor growth. The protein is Eukaryotic translation initiation factor 6 of Bos taurus (Bovine).